A 1432-amino-acid polypeptide reads, in one-letter code: Probable ATP-dependent RNA helicase spindle-E (1432 aa).

The region spanning 124–291 (LAAINAHPVV…FTTTNSVPPV (168 aa)) is the Helicase ATP-binding domain. Position 137–144 (137–144 (GQTGCGKT)) interacts with ATP. The DEAH box signature appears at 237 to 240 (DEVH). The 188-residue stretch at 337-524 (KIIMVIDNME…NSVLRAKELE (188 aa)) folds into the Helicase C-terminal domain. A Tudor domain is found at 936–999 (AGAITKGMMV…RLMPKELIQQ (64 aa)).

The protein belongs to the DEAD box helicase family. DEAH subfamily.

It is found in the cytoplasm. It catalyses the reaction ATP + H2O = ADP + phosphate + H(+). Its function is as follows. Probable ATP-binding RNA helicase which plays a central role during spermatogenesis and oogenesis by repressing transposable elements and preventing their mobilization, which is essential for the germline integrity. Acts via the piRNA metabolic process, which mediates the repression of transposable elements during meiosis by forming complexes composed of piRNAs and Piwi and govern the methylation and subsequent repression of transposons. Involved in the repression of LTR retrotransposon copia. Also involved in telomere regulation by repressing specialized telomeric retroelements HeT-A, TAHRE, and TART; Drosophila telomeres being maintained by transposition of specialized telomeric retroelements. Involved in telomeric trans-silencing, a repression mechanism by which a transposon or a transgene inserted in subtelomeric heterochromatin has the capacity to repress in trans in the female germline, a homologous transposon, or transgene located in euchromatin. Involved in the repression of testis-expressed Stellate genes by the homologous Su(Ste) repeats. Required for anteroposterior and dorsoventral axis formation during oogenesis. This is Probable ATP-dependent RNA helicase spindle-E (spn-E) from Drosophila erecta (Fruit fly).